A 30-amino-acid chain; its full sequence is Mejucin (30 aa).

The protein resides in the secreted. Functionally, bacteriocin that inhibits the growth of several Gram-positive bacteria, especially the food-borne pathogens L.monocytogenes, B.cereus strain ATCC 11778, B.cereus strain ATCC 21366, B.cereus strain ATCC 10876 and B.cereus strain ATCC 14579. Likely to act by disrupting the pathogen membrane resulting in leakage of intracellular constituents. Does not inhibit the growth of Gram-negative bacteria. The chain is Mejucin from Bacillus subtilis.